We begin with the raw amino-acid sequence, 1070 residues long: DNA-directed RNA polymerase subunit beta (1070 aa).

The protein belongs to the RNA polymerase beta chain family. As to quaternary structure, in plastids the minimal PEP RNA polymerase catalytic core is composed of four subunits: alpha, beta, beta', and beta''. When a (nuclear-encoded) sigma factor is associated with the core the holoenzyme is formed, which can initiate transcription.

The protein localises to the plastid. It is found in the chloroplast. The enzyme catalyses RNA(n) + a ribonucleoside 5'-triphosphate = RNA(n+1) + diphosphate. Functionally, DNA-dependent RNA polymerase catalyzes the transcription of DNA into RNA using the four ribonucleoside triphosphates as substrates. In Piper cenocladum (Ant piper), this protein is DNA-directed RNA polymerase subunit beta.